A 419-amino-acid polypeptide reads, in one-letter code: Peroxisomal membrane protein PMP47B (419 aa).

3 Solcar repeats span residues 6–120 (YDDL…TGKT), 142–230 (LSVW…LKSF), and 239–369 (VTPV…LLIL). Residues 12-32 (AFAGAGGGLLSMTLTYPLVTL) traverse the membrane as a helical segment. The segment covering 44–53 (KNEEEEKENS) has biased composition (basic and acidic residues). The interval 44 to 69 (KNEEEEKENSNEDGSLSPKSSNTSNI) is disordered. The segment covering 56–69 (DGSLSPKSSNTSNI) has biased composition (polar residues). A run of 3 helical transmembrane segments spans residues 98-118 (SALF…ELTG), 204-224 (FTGI…YTIF), and 245-265 (LLLG…YITL). The segment at 274-305 (MTENNEDSEKERTDSVQSLPEDGSDEDNSKEN) is disordered. Transmembrane regions (helical) follow at residues 310-330 (TINK…IIGY) and 349-369 (LLQS…LLIL).

The protein belongs to the mitochondrial carrier (TC 2.A.29) family.

The protein resides in the peroxisome membrane. May have transport activity. This chain is Peroxisomal membrane protein PMP47B (PMP47B), found in Candida boidinii (Yeast).